The primary structure comprises 805 residues: H(+)/Cl(-) exchange transporter 7 (805 aa).

The tract at residues 1–49 (MANVSKKVSWSGRDRDDEEAAPLLRRTARPGGGTPLLNGAGPGAARQSP) is disordered. Residues 1 to 126 (MANVSKKVSW…TAFRTVEIKR (126 aa)) are Cytoplasmic-facing. Residues S9 and S60 each carry the phosphoserine modification. Helical transmembrane passes span 127 to 159 (WVICALIGILTGLVACFIDIVVENLAGLKYRVI) and 174 to 197 (FSLLLWATLNAAFVLVGSVIVAFI). The short motif at 203 to 207 (GSGIP) is the Selectivity filter part_1 element. S204 is a chloride binding site. An intramembrane region (helical) is located at residues 206–213 (IPQIKCFL). 2 helical membrane passes run 223–241 (RLKTLVIKVSGVILSVVGG) and 247–264 (EGPMIHSGSVIAAGISQG). Residues 245 to 249 (GKEGP) carry the Selectivity filter part_2 motif. 2 consecutive intramembrane regions (helical) follow at residues 288 to 300 (FVSAGAAAGVSAA) and 304 to 312 (PVGGVLFSL). 5 helical membrane-spanning segments follow: residues 322 to 341 (FLTWRIFFASMISTFTLNFV), 375 to 405 (IPVFIAMGVVGGVLGAVFNALNYWLTMFRIR), 410 to 432 (PCLQVIEAVLVAAVTATVAFVLI), 487 to 507 (PLTLGLFTLVYFFLACWTYGL), and 512 to 535 (GVFIPSLLIGAAWGRLFGISLSYL). The Selectivity filter part_3 motif lies at 512–516 (GVFIP). A chloride-binding site is contributed by F514. The segment at residues 545–559 (GKYALMGAAAQLGGI) is an intramembrane region (helical). The note=Loop between two helices intramembrane region spans 560-562 (VRM). Residues 563–574 (TLSLTVIMMEAT) constitute an intramembrane region (helical). Positions 575–578 (SNVT) form an intramembrane region, note=Loop between two helices. Residues 579-597 (YGFPIMLVLMTAKIVGDVF) form a helical membrane-spanning segment. Residues 598–805 (IEGLYDMHIQ…GLEELSLAQT (208 aa)) are Cytoplasmic-facing. Y602 lines the chloride pocket. 2 consecutive CBS domains span residues 631–695 (MSTP…VFVE) and 741–799 (MNPS…GLEE). ATP-binding positions include 658-660 (HNG) and 783-786 (TRKD). S801 is subject to Phosphoserine.

This sequence belongs to the chloride channel (TC 2.A.49) family. ClC-7/CLCN7 subfamily. As to quaternary structure, chloride channel 7 are heteromers of alpha (CLCN7) and beta (OSTM1) subunits. In terms of tissue distribution, brain and kidney.

The protein localises to the lysosome membrane. The enzyme catalyses 2 chloride(in) + H(+)(out) = 2 chloride(out) + H(+)(in). Functionally, slowly voltage-gated channel mediating the exchange of chloride ions against protons. Functions as antiporter and contributes to the acidification of the lysosome lumen and may be involved in maintaining lysosomal pH. The CLC channel family contains both chloride channels and proton-coupled anion transporters that exchange chloride or another anion for protons. The presence of conserved gating glutamate residues is typical for family members that function as antiporters. This is H(+)/Cl(-) exchange transporter 7 from Homo sapiens (Human).